The chain runs to 334 residues: Glycerol-3-phosphate dehydrogenase [NAD(P)+] (334 aa).

NADPH-binding residues include Ser-11, Trp-12, Arg-32, and Lys-106. Lys-106 and Gly-136 together coordinate sn-glycerol 3-phosphate. Residue Ala-140 participates in NADPH binding. Residues Lys-191, Asp-244, Ser-254, Arg-255, and Asn-256 each coordinate sn-glycerol 3-phosphate. The active-site Proton acceptor is the Lys-191. Arg-255 provides a ligand contact to NADPH. NADPH-binding residues include Val-279 and Glu-281.

Belongs to the NAD-dependent glycerol-3-phosphate dehydrogenase family.

It is found in the cytoplasm. It catalyses the reaction sn-glycerol 3-phosphate + NAD(+) = dihydroxyacetone phosphate + NADH + H(+). It carries out the reaction sn-glycerol 3-phosphate + NADP(+) = dihydroxyacetone phosphate + NADPH + H(+). Its pathway is membrane lipid metabolism; glycerophospholipid metabolism. In terms of biological role, catalyzes the reduction of the glycolytic intermediate dihydroxyacetone phosphate (DHAP) to sn-glycerol 3-phosphate (G3P), the key precursor for phospholipid synthesis. The polypeptide is Glycerol-3-phosphate dehydrogenase [NAD(P)+] (Parafrankia sp. (strain EAN1pec)).